We begin with the raw amino-acid sequence, 925 residues long: Eukaryotic translation initiation factor 3 subunit A (925 aa).

The disordered stretch occupies residues 108-127; that stretch reads QAQTDAKEESNKDQAEEDLE. Residues 112-121 show a composition bias toward basic and acidic residues; that stretch reads DAKEESNKDQ. The PCI domain maps to 324-498; the sequence is FKFYSSQFVL…DTVSFAQDPF (175 aa). 2 disordered regions span residues 509–544 and 839–925; these read PESS…FTRN and KEAL…AGRG. Coiled coils occupy residues 534-666 and 785-885; these read EEQN…MKKL and SVIA…SSRS. Basic and acidic residues predominate over residues 839 to 880; the sequence is KEALAKEEELAKRRAERERINKERDEIARKQREIEELLEKKN. Basic residues predominate over residues 916-925; sequence RLKRMNAGRG.

It belongs to the eIF-3 subunit A family. As to quaternary structure, component of the eukaryotic translation initiation factor 3 (eIF-3) complex.

Its subcellular location is the cytoplasm. Its function is as follows. RNA-binding component of the eukaryotic translation initiation factor 3 (eIF-3) complex, which is involved in protein synthesis of a specialized repertoire of mRNAs and, together with other initiation factors, stimulates binding of mRNA and methionyl-tRNAi to the 40S ribosome. The eIF-3 complex specifically targets and initiates translation of a subset of mRNAs involved in cell proliferation. This Kluyveromyces lactis (strain ATCC 8585 / CBS 2359 / DSM 70799 / NBRC 1267 / NRRL Y-1140 / WM37) (Yeast) protein is Eukaryotic translation initiation factor 3 subunit A.